We begin with the raw amino-acid sequence, 269 residues long: Energy-coupling factor transporter ATP-binding protein EcfA1 (269 aa).

Residues 8 to 242 (IVFKNVSFQY…AEELTRIGLD (235 aa)) enclose the ABC transporter domain. Residue 42-49 (GHNGSGKS) participates in ATP binding.

Belongs to the ABC transporter superfamily. Energy-coupling factor EcfA family. As to quaternary structure, forms a stable energy-coupling factor (ECF) transporter complex composed of 2 membrane-embedded substrate-binding proteins (S component), 2 ATP-binding proteins (A component) and 2 transmembrane proteins (T component).

It is found in the cell membrane. In terms of biological role, ATP-binding (A) component of a common energy-coupling factor (ECF) ABC-transporter complex. Unlike classic ABC transporters this ECF transporter provides the energy necessary to transport a number of different substrates. The chain is Energy-coupling factor transporter ATP-binding protein EcfA1 from Staphylococcus aureus (strain USA300).